The chain runs to 667 residues: tRNA 5-methylaminomethyl-2-thiouridine biosynthesis bifunctional protein MnmC (667 aa).

Positions 1-215 are tRNA (mnm(5)s(2)U34)-methyltransferase; sequence MKFINGILFN…KREMIRAYFN (215 aa). The segment at 240-667 is FAD-dependent cmnm(5)s(2)U34 oxidoreductase; that stretch reads IGAGIAGIVT…LIRKLKKGLK (428 aa).

It in the N-terminal section; belongs to the methyltransferase superfamily. tRNA (mnm(5)s(2)U34)-methyltransferase family. In the C-terminal section; belongs to the DAO family. It depends on FAD as a cofactor.

The protein resides in the cytoplasm. The enzyme catalyses 5-aminomethyl-2-thiouridine(34) in tRNA + S-adenosyl-L-methionine = 5-methylaminomethyl-2-thiouridine(34) in tRNA + S-adenosyl-L-homocysteine + H(+). In terms of biological role, catalyzes the last two steps in the biosynthesis of 5-methylaminomethyl-2-thiouridine (mnm(5)s(2)U) at the wobble position (U34) in tRNA. Catalyzes the FAD-dependent demodification of cmnm(5)s(2)U34 to nm(5)s(2)U34, followed by the transfer of a methyl group from S-adenosyl-L-methionine to nm(5)s(2)U34, to form mnm(5)s(2)U34. In Campylobacter hominis (strain ATCC BAA-381 / DSM 21671 / CCUG 45161 / LMG 19568 / NCTC 13146 / CH001A), this protein is tRNA 5-methylaminomethyl-2-thiouridine biosynthesis bifunctional protein MnmC.